The following is a 603-amino-acid chain: UvrABC system protein C (603 aa).

In terms of domain architecture, GIY-YIG spans 15 to 92; that stretch reads DQPGCYLMKD…IKKHDPRFNI (78 aa). One can recognise a UVR domain in the interval 197 to 232; the sequence is KTVKNDLMKKMQEAAENMEFEKAGEFRDQINAIETT.

It belongs to the UvrC family. In terms of assembly, interacts with UvrB in an incision complex.

The protein resides in the cytoplasm. Functionally, the UvrABC repair system catalyzes the recognition and processing of DNA lesions. UvrC both incises the 5' and 3' sides of the lesion. The N-terminal half is responsible for the 3' incision and the C-terminal half is responsible for the 5' incision. This is UvrABC system protein C from Listeria monocytogenes serotype 4b (strain F2365).